Reading from the N-terminus, the 580-residue chain is Protein O-linked-mannose beta-1,4-N-acetylglucosaminyltransferase 2 (580 aa).

The Cytoplasmic segment spans residues 1-4; sequence MHLS. A helical; Signal-anchor for type II membrane protein membrane pass occupies residues 5–25; the sequence is AVFNALLVSVLAAVLWKHVRL. The Lumenal portion of the chain corresponds to 26 to 580; that stretch reads REHAATLEEE…PFADVLVCST (555 aa). N-linked (GlcNAc...) asparagine glycans are attached at residues Asn-99 and Asn-276. The Fibronectin type-III domain maps to 488-580; the sequence is ARCQASVQGA…PFADVLVCST (93 aa).

It belongs to the glycosyltransferase 61 family. In terms of tissue distribution, mainly expressed in the central nervous system.

It localises to the endoplasmic reticulum membrane. The catalysed reaction is 3-O-(alpha-D-mannosyl)-L-threonyl-[protein] + UDP-N-acetyl-alpha-D-glucosamine = 3-O-(N-acetyl-beta-D-glucosaminyl-(1-&gt;4)-alpha-D-mannosyl)-L-threonyl-[protein] + UDP + H(+). The protein operates within protein modification; protein glycosylation. O-linked mannose beta-1,4-N-acetylglucosaminyltransferase that transfers UDP-N-acetyl-D-glucosamine to the 4-position of the mannose to generate N-acetyl-D-glucosamine-beta-1,4-O-D-mannosylprotein. Involved in the biosynthesis of the phosphorylated O-mannosyl trisaccharide (N-acetylgalactosamine-beta-3-N-acetylglucosamine-beta-4-(phosphate-6-)mannose), a carbohydrate structure present in alpha-dystroglycan (DAG1), which is required for binding laminin G-like domain-containing extracellular proteins with high affinity. This Mus musculus (Mouse) protein is Protein O-linked-mannose beta-1,4-N-acetylglucosaminyltransferase 2 (Pomgnt2).